The primary structure comprises 272 residues: uncharacterized protein (272 aa).

Residues 12–34 (FITG…DGAN), 39–40 (DI), 77–78 (DV), and Asn104 contribute to the NAD(+) site. Ser153 is a binding site for substrate. Tyr170 acts as the Proton acceptor in catalysis. NAD(+) is bound by residues Lys174 and 203–205 (VDT).

This sequence belongs to the short-chain dehydrogenases/reductases (SDR) family.

This is an uncharacterized protein from Mycobacterium tuberculosis (strain CDC 1551 / Oshkosh).